Here is a 339-residue protein sequence, read N- to C-terminus: Lipoate-protein ligase A (339 aa).

A BPL/LPL catalytic domain is found at 29-217; sequence PKKQSILFLW…AFFQHYGMKV (189 aa). ATP contacts are provided by residues Arg-71, 76-79, and Lys-135; that span reads GAVF. A (R)-lipoate-binding site is contributed by Lys-135.

This sequence belongs to the LplA family. Monomer.

The protein resides in the cytoplasm. It catalyses the reaction L-lysyl-[lipoyl-carrier protein] + (R)-lipoate + ATP = N(6)-[(R)-lipoyl]-L-lysyl-[lipoyl-carrier protein] + AMP + diphosphate + H(+). The protein operates within protein modification; protein lipoylation via exogenous pathway; protein N(6)-(lipoyl)lysine from lipoate: step 1/2. It participates in protein modification; protein lipoylation via exogenous pathway; protein N(6)-(lipoyl)lysine from lipoate: step 2/2. Catalyzes both the ATP-dependent activation of exogenously supplied lipoate to lipoyl-AMP and the transfer of the activated lipoyl onto the lipoyl domains of lipoate-dependent enzymes. In Blochmanniella pennsylvanica (strain BPEN), this protein is Lipoate-protein ligase A.